The primary structure comprises 488 residues: Acetyl-coenzyme A carboxylase carboxyl transferase subunit beta, chloroplastic (488 aa).

The CoA carboxyltransferase N-terminal domain maps to 227–488 (LWIQCDNCYG…LHAFFPLNTN (262 aa)). The Zn(2+) site is built by C231, C234, C247, and C250. The C4-type zinc finger occupies 231–250 (CDNCYGLMYKKVKMNVCEQC).

It belongs to the AccD/PCCB family. As to quaternary structure, acetyl-CoA carboxylase is a heterohexamer composed of biotin carboxyl carrier protein, biotin carboxylase and 2 subunits each of ACCase subunit alpha and ACCase plastid-coded subunit beta (accD). Requires Zn(2+) as cofactor. Accumulates in fatty acids synthesizing tissues such as embryos, expanding leaves, flower buds, flowers, and developing siliques.

Its subcellular location is the plastid. It localises to the chloroplast membrane. The protein localises to the chloroplast stroma. The enzyme catalyses N(6)-carboxybiotinyl-L-lysyl-[protein] + acetyl-CoA = N(6)-biotinyl-L-lysyl-[protein] + malonyl-CoA. It participates in lipid metabolism; malonyl-CoA biosynthesis; malonyl-CoA from acetyl-CoA: step 1/1. In terms of biological role, component of the acetyl coenzyme A carboxylase (ACC) complex. Biotin carboxylase (BC) catalyzes the carboxylation of biotin on its carrier protein (BCCP) and then the CO(2) group is transferred by the transcarboxylase to acetyl-CoA to form malonyl-CoA. The chain is Acetyl-coenzyme A carboxylase carboxyl transferase subunit beta, chloroplastic from Arabidopsis thaliana (Mouse-ear cress).